A 256-amino-acid chain; its full sequence is Thiazole synthase (256 aa).

Catalysis depends on lysine 98, which acts as the Schiff-base intermediate with DXP. Residues glycine 159, 185–186 (AG), and 207–208 (NT) contribute to the 1-deoxy-D-xylulose 5-phosphate site.

It belongs to the ThiG family. Homotetramer. Forms heterodimers with either ThiH or ThiS.

It localises to the cytoplasm. It catalyses the reaction [ThiS sulfur-carrier protein]-C-terminal-Gly-aminoethanethioate + 2-iminoacetate + 1-deoxy-D-xylulose 5-phosphate = [ThiS sulfur-carrier protein]-C-terminal Gly-Gly + 2-[(2R,5Z)-2-carboxy-4-methylthiazol-5(2H)-ylidene]ethyl phosphate + 2 H2O + H(+). The protein operates within cofactor biosynthesis; thiamine diphosphate biosynthesis. Catalyzes the rearrangement of 1-deoxy-D-xylulose 5-phosphate (DXP) to produce the thiazole phosphate moiety of thiamine. Sulfur is provided by the thiocarboxylate moiety of the carrier protein ThiS. In vitro, sulfur can be provided by H(2)S. This chain is Thiazole synthase, found in Aliivibrio fischeri (strain ATCC 700601 / ES114) (Vibrio fischeri).